The sequence spans 307 residues: MLINKNLKIGIVVEYNPFHNGHIYQLNWIKNNYPNSKIIIVMSHKYSQRGEIICMPFWKRKLWAKKYDVSKVLKLSTRKTIQAAHIFAQNAIQKLNKEKIDILVFGSESTNDSLMLKIATFIKENKEIYNQTLKKNLKGGNSFPKANFLTLKELTNEDFSLPNDILGFEYIKQIVENNYKIQPIAIKRSVGFHSEEPSDEFASASLIRKMLKDGRDVSKYTPVDLKQIPTKLLIENTFLKFKKYILKTPASKLKKYLLVDEGIENLFKKNILLFDNYHDFIDACVSRRYTRSKIMRTYLCILLKIKK.

ATP is bound by residues 12-25 (VVEY…HIYQ), glycine 106, asparagine 163, and arginine 188.

Belongs to the TmcAL family.

It is found in the cytoplasm. The catalysed reaction is cytidine(34) in elongator tRNA(Met) + acetate + ATP = N(4)-acetylcytidine(34) in elongator tRNA(Met) + AMP + diphosphate. Functionally, catalyzes the formation of N(4)-acetylcytidine (ac(4)C) at the wobble position of elongator tRNA(Met), using acetate and ATP as substrates. First activates an acetate ion to form acetyladenylate (Ac-AMP) and then transfers the acetyl group to tRNA to form ac(4)C34. This chain is tRNA(Met) cytidine acetate ligase, found in Mycoplasmopsis synoviae (strain 53) (Mycoplasma synoviae).